A 137-amino-acid chain; its full sequence is Large ribosomal subunit protein uL16 (137 aa).

It belongs to the universal ribosomal protein uL16 family. In terms of assembly, part of the 50S ribosomal subunit.

Functionally, binds 23S rRNA and is also seen to make contacts with the A and possibly P site tRNAs. The protein is Large ribosomal subunit protein uL16 of Tolumonas auensis (strain DSM 9187 / NBRC 110442 / TA 4).